A 267-amino-acid chain; its full sequence is Undecaprenyl-diphosphatase (267 aa).

The next 7 helical transmembrane spans lie at 1 to 21 (MTLWQAFILSLIQGITEFLPI), 39 to 59 (AGVAFDAFTGLGTLTAVLFYY), 85 to 105 (AKLGNQLIVATLPALLIGFMV), 117 to 137 (LLIASTTMIFAIFLAAADFWG), 189 to 209 (FSFLQSIPISAAAGGYGLWKL), 220 to 240 (LIALSYVTATLAAYVCIALFI), and 246 to 266 (VGMMPHVIYRLLLGAYLFFVF).

The protein belongs to the UppP family.

Its subcellular location is the cell inner membrane. It catalyses the reaction di-trans,octa-cis-undecaprenyl diphosphate + H2O = di-trans,octa-cis-undecaprenyl phosphate + phosphate + H(+). Catalyzes the dephosphorylation of undecaprenyl diphosphate (UPP). Confers resistance to bacitracin. This is Undecaprenyl-diphosphatase from Dichelobacter nodosus (strain VCS1703A).